Here is an 867-residue protein sequence, read N- to C-terminus: Valine--tRNA ligase (867 aa).

The short motif at 42-52 is the 'HIGH' region element; that stretch reads PNITGKIHMGH. The 'KMSKS' region motif lies at 521-525; it reads KMSKS. Lys524 contributes to the ATP binding site. The stretch at 794-867 forms a coiled coil; it reads LGTLIDVKSE…QIISDLEAKA (74 aa).

It belongs to the class-I aminoacyl-tRNA synthetase family. ValS type 1 subfamily. Monomer.

The protein localises to the cytoplasm. It catalyses the reaction tRNA(Val) + L-valine + ATP = L-valyl-tRNA(Val) + AMP + diphosphate. Its function is as follows. Catalyzes the attachment of valine to tRNA(Val). As ValRS can inadvertently accommodate and process structurally similar amino acids such as threonine, to avoid such errors, it has a 'posttransfer' editing activity that hydrolyzes mischarged Thr-tRNA(Val) in a tRNA-dependent manner. This Fervidobacterium nodosum (strain ATCC 35602 / DSM 5306 / Rt17-B1) protein is Valine--tRNA ligase.